The following is a 238-amino-acid chain: Peroxisomal coenzyme A diphosphatase NUDT7 (238 aa).

K20 is subject to N6-succinyllysine. Residues 37-172 (YNKYSVLLPL…VTRLGHRFIN (136 aa)) form the Nudix hydrolase domain. The short motif at 77–98 (KRDPTDMDDAATALREAQEEVG) is the Nudix box element. Positions 92 and 96 each coordinate Mg(2+). Residues 236–238 (SRL) carry the Microbody targeting signal motif.

Belongs to the Nudix hydrolase family. PCD1 subfamily. As to quaternary structure, monomer. Requires Mn(2+) as cofactor. Mg(2+) is required as a cofactor. In terms of tissue distribution, expressed in liver, kidney, pancreas, pituitary, small intestine, spleen, heart and placenta. Weakly expressed in brain.

Its subcellular location is the peroxisome. The enzyme catalyses hexanoyl-CoA + H2O = hexanoyl-4'-phosphopantetheine + adenosine 3',5'-bisphosphate + 2 H(+). It carries out the reaction octanoyl-CoA + H2O = S-octanoyl-4'-phosphopantetheine + adenosine 3',5'-bisphosphate + 2 H(+). It catalyses the reaction butanoyl-CoA + H2O = S-butanoyl-4'-phosphopantetheine + adenosine 3',5'-bisphosphate + 2 H(+). The catalysed reaction is decanoyl-CoA + H2O = decanoyl-4'-phosphopantetheine + adenosine 3',5'-bisphosphate + 2 H(+). The enzyme catalyses dodecanoyl-CoA + H2O = S-dodecanoyl-4'-phosphopantetheine + adenosine 3',5'-bisphosphate + 2 H(+). It carries out the reaction tetradecanoyl-CoA + H2O = tetradecanoyl-4'-phosphopantetheine + adenosine 3',5'-bisphosphate + 2 H(+). It catalyses the reaction choloyl-CoA + H2O = S-choloyl-4'-phosphopantetheine + adenosine 3',5'-bisphosphate + 2 H(+). The catalysed reaction is 3alpha,7alpha,12alpha-trihydroxy-5beta-cholestan-26-oyl-CoA + H2O = 3alpha,7alpha,12alpha-trihydroxy-5beta-cholestan-26-oyl-4'-phosphopantetheine + adenosine 3',5'-bisphosphate + 2 H(+). The enzyme catalyses acetyl-CoA + H2O = S-acetyl-4'-phosphopantetheine + adenosine 3',5'-bisphosphate + 2 H(+). It carries out the reaction CoA + H2O = (R)-4'-phosphopantetheine + adenosine 3',5'-bisphosphate + 2 H(+). It catalyses the reaction propanoyl-CoA + H2O = propanoyl-4'-phosphopantetheine + adenosine 3',5'-bisphosphate + 2 H(+). The catalysed reaction is malonyl-CoA + H2O = malonyl-4'-phosphopantetheine + adenosine 3',5'-bisphosphate + 2 H(+). The enzyme catalyses succinyl-CoA + H2O = succinyl-4'-phosphopantetheine + adenosine 3',5'-bisphosphate + 2 H(+). It carries out the reaction a 5'-end CoA-ribonucleoside in mRNA + H2O = a 5'-end phospho-adenosine-phospho-ribonucleoside in mRNA + (R)-4'-phosphopantetheine + 2 H(+). With respect to regulation, inhibited by fluoride. Fatty acyl-coenzyme A (CoA) diphosphatase that hydrolyzes fatty acyl-CoA to yield acyl-4'-phosphopantetheine and adenosine 3',5'-bisphosphate. Cleaves CoA, CoA esters and oxidized CoA with similar efficiencies. Preferentially hydrolyzes medium-chain acyl-CoAs and bile acid-CoAs. Has no activity toward NDP-sugars, CDP-alcohols, (deoxy)nucleoside 5'-triphosphates, nucleoside 5'-di or monophosphates, diadenosine polyphosphates, NAD, NADH, NADP, NADPH or thymidine-5'-monophospho-p-nitrophenyl ester. May be required to eliminate oxidized CoA from peroxisomes, or regulate CoA and acyl-CoA levels in this organelle in response to metabolic demand. Does not play a role in U8 snoRNA decapping activity. Binds U8 snoRNA. Exhibits decapping activity towards dpCoA-capped RNAs in vitro. This is Peroxisomal coenzyme A diphosphatase NUDT7 from Homo sapiens (Human).